A 217-amino-acid polypeptide reads, in one-letter code: Adenylate kinase (217 aa).

Glycine 10 to threonine 15 contributes to the ATP binding site. The interval serine 30–valine 59 is NMP. Residues threonine 31, arginine 36, glycine 57–valine 59, glycine 85–arginine 88, and glutamine 92 contribute to the AMP site. The tract at residues glycine 122 to aspartate 159 is LID. ATP contacts are provided by residues arginine 123 and valine 132–tyrosine 133. Positions 156 and 167 each coordinate AMP. Arginine 202 lines the ATP pocket.

The protein belongs to the adenylate kinase family. Monomer.

It is found in the cytoplasm. The enzyme catalyses AMP + ATP = 2 ADP. The protein operates within purine metabolism; AMP biosynthesis via salvage pathway; AMP from ADP: step 1/1. Functionally, catalyzes the reversible transfer of the terminal phosphate group between ATP and AMP. Plays an important role in cellular energy homeostasis and in adenine nucleotide metabolism. This chain is Adenylate kinase, found in Acinetobacter baumannii (strain AB307-0294).